Consider the following 326-residue polypeptide: Glyoxylate/hydroxypyruvate reductase B (326 aa).

Catalysis depends on residues R237 and E266. H285 serves as the catalytic Proton donor.

Belongs to the D-isomer specific 2-hydroxyacid dehydrogenase family. GhrB subfamily. Homodimer.

It is found in the cytoplasm. It catalyses the reaction glycolate + NADP(+) = glyoxylate + NADPH + H(+). It carries out the reaction (R)-glycerate + NAD(+) = 3-hydroxypyruvate + NADH + H(+). The enzyme catalyses (R)-glycerate + NADP(+) = 3-hydroxypyruvate + NADPH + H(+). Its function is as follows. Catalyzes the NADPH-dependent reduction of glyoxylate and hydroxypyruvate into glycolate and glycerate, respectively. The sequence is that of Glyoxylate/hydroxypyruvate reductase B from Yersinia enterocolitica serotype O:8 / biotype 1B (strain NCTC 13174 / 8081).